A 337-amino-acid chain; its full sequence is Glyceraldehyde-3-phosphate dehydrogenase 1 (337 aa).

Residues arginine 12–isoleucine 13, aspartate 34, and arginine 79 contribute to the NAD(+) site. D-glyceraldehyde 3-phosphate is bound by residues serine 150–threonine 152, threonine 181, threonine 210–glycine 211, and arginine 233. The Nucleophile role is filled by cysteine 151. Asparagine 315 serves as a coordination point for NAD(+).

The protein belongs to the glyceraldehyde-3-phosphate dehydrogenase family. Homotetramer.

The protein localises to the cytoplasm. It catalyses the reaction D-glyceraldehyde 3-phosphate + phosphate + NAD(+) = (2R)-3-phospho-glyceroyl phosphate + NADH + H(+). The protein operates within carbohydrate degradation; glycolysis; pyruvate from D-glyceraldehyde 3-phosphate: step 1/5. In Mucor circinelloides f. lusitanicus (Mucor racemosus var. lusitanicus), this protein is Glyceraldehyde-3-phosphate dehydrogenase 1 (GPD1).